The following is a 105-amino-acid chain: Chloroacetanilide N-alkylformylase 2, ferredoxin component (105 aa).

A 2Fe-2S ferredoxin-type domain is found at 2–105; that stretch reads PKLVVVTREG…GLTVTIAPED (104 aa). [2Fe-2S] cluster is bound by residues cysteine 40, cysteine 46, cysteine 49, and cysteine 86.

It belongs to the adrenodoxin/putidaredoxin family. As to quaternary structure, the chloroacetanilide N-alkylformylase multicomponent enzyme system is composed of an oxygenase component (CndA) and an electron transfer component formed by a ferredoxin reductase (CndC1) and a ferredoxin (CndB1). In vitro, chloroacetanilide N-alkylformylase assays in which CndB1 is substituted for CndB2 demonstrate that the two enzymes possess nearly identical activities. [2Fe-2S] cluster serves as cofactor.

Functionally, component of the chloroacetanilide N-alkylformylase multicomponent enzyme system involved in the degradation of chloroacetanilide herbicides (N-alkoxyalkyl-N-chloroacetyl-substituted aniline derivatives). In vitro, functions as an intermediate electron transfer protein. The protein is Chloroacetanilide N-alkylformylase 2, ferredoxin component of Rhizorhabdus wittichii (strain DC-6 / KACC 16600) (Sphingomonas wittichii).